Reading from the N-terminus, the 367-residue chain is Flagellar P-ring protein (367 aa).

An N-terminal signal peptide occupies residues 1-21 (MYVFKALAGIVLALVATLAHA).

The protein belongs to the FlgI family. The basal body constitutes a major portion of the flagellar organelle and consists of four rings (L,P,S, and M) mounted on a central rod.

The protein resides in the periplasm. Its subcellular location is the bacterial flagellum basal body. Functionally, assembles around the rod to form the L-ring and probably protects the motor/basal body from shearing forces during rotation. In Salmonella choleraesuis (strain SC-B67), this protein is Flagellar P-ring protein.